The sequence spans 369 residues: Phenylalanine--tRNA ligase alpha subunit (369 aa).

Position 269 (Glu-269) interacts with Mg(2+).

It belongs to the class-II aminoacyl-tRNA synthetase family. Phe-tRNA synthetase alpha subunit type 1 subfamily. As to quaternary structure, tetramer of two alpha and two beta subunits. Mg(2+) serves as cofactor.

It is found in the cytoplasm. The catalysed reaction is tRNA(Phe) + L-phenylalanine + ATP = L-phenylalanyl-tRNA(Phe) + AMP + diphosphate + H(+). The protein is Phenylalanine--tRNA ligase alpha subunit of Brucella canis (strain ATCC 23365 / NCTC 10854 / RM-666).